A 320-amino-acid chain; its full sequence is (+)-corvol ether B synthase/(+)-corvol ether A synthase ((2E,6E)-farnesyl diphosphate cyclizing) (320 aa).

2 residues coordinate Mg(2+): Asp-78 and Asp-83. Residues Asp-78 to Asp-83 carry the DDXXXD motif motif. Substrate is bound at residue Arg-171. The Mg(2+) site is built by Asn-217, Ser-221, and Glu-225.

The protein belongs to the terpene synthase family. The cofactor is Mg(2+).

It carries out the reaction (2E,6E)-farnesyl diphosphate + H2O = (+)-corvol ether B + diphosphate. It catalyses the reaction (2E,6E)-farnesyl diphosphate + H2O = (+)-corvol ether A + diphosphate. The protein operates within secondary metabolite biosynthesis; terpenoid biosynthesis. In terms of biological role, catalyzes the conversion of (2E,6E)-farnesyl diphosphate (FPP) into (+)-corvol ether A and (+)-corvol ether B via a 1,10-cyclization, which requires isomerization of FPP to nerolidyl diphosphate (NPP) and then abstraction of the pyrophosphate from intermediate NPP leading to a (E,Z)-germacradienyl (helminthogermacradienyl) cation. The preferred substrate is (2E,6E)-farnesyl diphosphate (FPP), however geranyl diphosphate (GPP) is also able to produce small amounts of several acyclic and cyclic monoterpenes, with linalool as the main product. This is (+)-corvol ether B synthase/(+)-corvol ether A synthase ((2E,6E)-farnesyl diphosphate cyclizing) from Kitasatospora setae (strain ATCC 33774 / DSM 43861 / JCM 3304 / KCC A-0304 / NBRC 14216 / KM-6054) (Streptomyces setae).